The following is a 153-amino-acid chain: 6,7-dimethyl-8-ribityllumazine synthase (153 aa).

Residues F22, 56–58 (AFE), and 80–82 (AVI) contribute to the 5-amino-6-(D-ribitylamino)uracil site. 85–86 (ST) lines the (2S)-2-hydroxy-3-oxobutyl phosphate pocket. H88 functions as the Proton donor in the catalytic mechanism. F113 contributes to the 5-amino-6-(D-ribitylamino)uracil binding site. R127 lines the (2S)-2-hydroxy-3-oxobutyl phosphate pocket.

It belongs to the DMRL synthase family.

The enzyme catalyses (2S)-2-hydroxy-3-oxobutyl phosphate + 5-amino-6-(D-ribitylamino)uracil = 6,7-dimethyl-8-(1-D-ribityl)lumazine + phosphate + 2 H2O + H(+). The protein operates within cofactor biosynthesis; riboflavin biosynthesis; riboflavin from 2-hydroxy-3-oxobutyl phosphate and 5-amino-6-(D-ribitylamino)uracil: step 1/2. Functionally, catalyzes the formation of 6,7-dimethyl-8-ribityllumazine by condensation of 5-amino-6-(D-ribitylamino)uracil with 3,4-dihydroxy-2-butanone 4-phosphate. This is the penultimate step in the biosynthesis of riboflavin. This chain is 6,7-dimethyl-8-ribityllumazine synthase, found in Clostridium botulinum (strain Alaska E43 / Type E3).